The primary structure comprises 411 residues: Adenylosuccinate synthetase (411 aa).

Residues 11–17 (GDEGKGK) and 39–41 (GHT) contribute to the GTP site. Asp12 (proton acceptor) is an active-site residue. Positions 12 and 39 each coordinate Mg(2+). Residues 12-15 (DEGK), 37-40 (NAGH), Thr121, Arg135, Gln215, Thr230, and Arg294 contribute to the IMP site. The active-site Proton donor is the His40. Residue 290 to 296 (TTTKRPR) participates in substrate binding. GTP contacts are provided by residues Arg296, 322 to 324 (KLD), and 400 to 402 (STS).

Belongs to the adenylosuccinate synthetase family. As to quaternary structure, homodimer. The cofactor is Mg(2+).

Its subcellular location is the cytoplasm. The enzyme catalyses IMP + L-aspartate + GTP = N(6)-(1,2-dicarboxyethyl)-AMP + GDP + phosphate + 2 H(+). The protein operates within purine metabolism; AMP biosynthesis via de novo pathway; AMP from IMP: step 1/2. Its function is as follows. Plays an important role in the de novo pathway of purine nucleotide biosynthesis. Catalyzes the first committed step in the biosynthesis of AMP from IMP. The chain is Adenylosuccinate synthetase from Helicobacter acinonychis (strain Sheeba).